A 680-amino-acid chain; its full sequence is Cytosolic endo-beta-N-acetylglucosaminidase 1 (680 aa).

Residues 1-15 show a composition bias toward pro residues; sequence MSVAPPAPSPPPFDP. The tract at residues 1–21 is disordered; that stretch reads MSVAPPAPSPPPFDPTKPSTP.

This sequence belongs to the glycosyl hydrolase 85 family.

Its subcellular location is the cytoplasm. The protein localises to the cytosol. The catalysed reaction is an N(4)-(oligosaccharide-(1-&gt;3)-[oligosaccharide-(1-&gt;6)]-beta-D-Man-(1-&gt;4)-beta-D-GlcNAc-(1-&gt;4)-alpha-D-GlcNAc)-L-asparaginyl-[protein] + H2O = an oligosaccharide-(1-&gt;3)-[oligosaccharide-(1-&gt;6)]-beta-D-Man-(1-&gt;4)-D-GlcNAc + N(4)-(N-acetyl-beta-D-glucosaminyl)-L-asparaginyl-[protein]. Endoglycosidase that releases N-glycans from glycoproteins by cleaving the beta-1,4-glycosidic bond in the N,N'-diacetylchitobiose core. Involved in the production of high-mannose type N-glycans during plant development and fruit maturation. The sequence is that of Cytosolic endo-beta-N-acetylglucosaminidase 1 from Arabidopsis thaliana (Mouse-ear cress).